The chain runs to 139 residues: D-ribose pyranase (139 aa).

H20 acts as the Proton donor in catalysis. Residues D28, H106, and 128-130 each bind substrate; that span reads YAN.

Belongs to the RbsD / FucU family. RbsD subfamily. In terms of assembly, homodecamer.

It localises to the cytoplasm. The catalysed reaction is beta-D-ribopyranose = beta-D-ribofuranose. Its pathway is carbohydrate metabolism; D-ribose degradation; D-ribose 5-phosphate from beta-D-ribopyranose: step 1/2. Its function is as follows. Catalyzes the interconversion of beta-pyran and beta-furan forms of D-ribose. The protein is D-ribose pyranase of Salmonella arizonae (strain ATCC BAA-731 / CDC346-86 / RSK2980).